The sequence spans 950 residues: Zinc finger CCCH domain-containing protein 3 (950 aa).

Disordered regions lie at residues 32–106 (GNSS…HPEP), 127–182 (IKPP…TKVG), 201–220 (VVKS…RTVS), and 314–489 (SEKS…VLRK). Positions 56 to 74 (RPSRRGFSSHHGPSWRKKY) are enriched in basic residues. Positions 76–96 (LVNQPVESSDPASDPAFQTSL) are enriched in polar residues. A compositionally biased stretch (polar residues) spans 327-338 (PRTTLESGNKAT). The segment covering 344–360 (KTEKPQPKVDPEVRPEK) has biased composition (basic and acidic residues). The segment covering 370-388 (SPSKYKWKASSPSASSSSS) has biased composition (low complexity). A compositionally biased stretch (polar residues) spans 402–412 (SQLSPVPSRPT). The residue at position 405 (Ser-405) is a Phosphoserine. Positions 438 to 449 (VKSRTKIIRRRG) are enriched in basic residues. Residues 460–470 (SPTTATTSKNH) are compositionally biased toward polar residues. 5 consecutive C3H1-type zinc fingers follow at residues 662–690 (EKKR…HDPE), 694–717 (VCTR…HHVS), 718–744 (KEKM…HVYV), 745–772 (SRKA…HTLL), and 773–795 (CPDF…HRNQ). The segment at 793 to 950 (RNQKRHGRRT…GKPLHIKPRL (158 aa)) is disordered. The span at 828–838 (PTTTQRSVRQM) shows a compositional bias: polar residues. The span at 839–849 (SSGLASGAEAP) shows a compositional bias: low complexity. A phosphoserine mark is found at Ser-851 and Ser-855. Positions 857–888 (RVLASTSTLSSKATAASSPSPSPSTSSPAPSL) are enriched in low complexity. A compositionally biased stretch (polar residues) spans 914–928 (SLHSSPSPGGQTETG). A phosphoserine mark is found at Ser-918, Ser-920, and Ser-934.

Interacts with SMAD1, SMAD3, SMAD4, CPSF2 and CPSF3.

The protein resides in the nucleus. Its function is as follows. Required for the export of polyadenylated mRNAs from the nucleus. Enhances ACVR1B-induced SMAD-dependent transcription. Binds to single-stranded DNA but not to double-stranded DNA in vitro. Involved in RNA cleavage. The polypeptide is Zinc finger CCCH domain-containing protein 3 (Zc3h3) (Mus musculus (Mouse)).